The sequence spans 506 residues: Maturase K (506 aa).

This sequence belongs to the intron maturase 2 family. MatK subfamily.

Its subcellular location is the plastid. The protein resides in the chloroplast. Functionally, usually encoded in the trnK tRNA gene intron. Probably assists in splicing its own and other chloroplast group II introns. The polypeptide is Maturase K (Rhododendron tsusiophyllum (Rhododendron)).